A 374-amino-acid chain; its full sequence is MIFDEDSSSVAQESGYMGVGSPYSSDVGRISMSDHWNKLTKPSSIKVVNHGNALNKADLIIEPLESGFALTLGNALRRVMMSSLRGFAVYGVEIENVLHEFTSISGVREDVTDILLNISMIRLKLSGMDNKVLSLKVKGPCEVRSGMIADTPDCTILNKDLLICTLDQDVDFNIKMYVNSGKGYVPAVKRKSINKFGLNDVPVNFIATNALYSPIKKASFRVESSRIGQFTDYDRLIMSVETDHSILPDEAVALAARILQDQFQQFINFDETDEPHQKVDTKDVLPYDSNLLRKVDELELSVRSYNCLKNDNITYIGDLVQKTESDMLRTPNFGRKSLNEINELLASMNLHLGMKIANWPPESIESLSKQYSEE.

The alpha N-terminal domain (alpha-NTD) stretch occupies residues Met1–Asp270. The segment at Lys282–Glu374 is alpha C-terminal domain (alpha-CTD).

The protein belongs to the RNA polymerase alpha chain family. In terms of assembly, homodimer. The RNAP catalytic core consists of 2 alpha, 1 beta, 1 beta' and 1 omega subunit. When a sigma factor is associated with the core the holoenzyme is formed, which can initiate transcription.

It carries out the reaction RNA(n) + a ribonucleoside 5'-triphosphate = RNA(n+1) + diphosphate. In terms of biological role, DNA-dependent RNA polymerase catalyzes the transcription of DNA into RNA using the four ribonucleoside triphosphates as substrates. The polypeptide is DNA-directed RNA polymerase subunit alpha (Ehrlichia ruminantium (strain Welgevonden)).